The chain runs to 772 residues: Protein U58 (772 aa).

Belongs to the herpesviridae UL87 family.

In Human herpesvirus 6B (strain Z29) (HHV-6 variant B), this protein is Protein U58 (U58).